We begin with the raw amino-acid sequence, 508 residues long: Histidine ammonia-lyase (508 aa).

The 5-imidazolinone (Ala-Gly) cross-link spans 143-145 (ASG). Position 144 is a 2,3-didehydroalanine (Ser) (Ser-144).

The protein belongs to the PAL/histidase family. Post-translationally, contains an active site 4-methylidene-imidazol-5-one (MIO), which is formed autocatalytically by cyclization and dehydration of residues Ala-Ser-Gly.

The protein localises to the cytoplasm. The enzyme catalyses L-histidine = trans-urocanate + NH4(+). The protein operates within amino-acid degradation; L-histidine degradation into L-glutamate; N-formimidoyl-L-glutamate from L-histidine: step 1/3. This chain is Histidine ammonia-lyase, found in Caldanaerobacter subterraneus subsp. tengcongensis (strain DSM 15242 / JCM 11007 / NBRC 100824 / MB4) (Thermoanaerobacter tengcongensis).